Here is a 224-residue protein sequence, read N- to C-terminus: Cytidylate kinase (224 aa).

Residue G14–T22 participates in ATP binding.

The protein belongs to the cytidylate kinase family. Type 1 subfamily.

The protein resides in the cytoplasm. It catalyses the reaction CMP + ATP = CDP + ADP. The enzyme catalyses dCMP + ATP = dCDP + ADP. This Mycoplasmoides gallisepticum (strain R(low / passage 15 / clone 2)) (Mycoplasma gallisepticum) protein is Cytidylate kinase.